The primary structure comprises 213 residues: FMN-dependent NADH:quinone oxidoreductase 1 (213 aa).

Residue 18-20 (SVS) coordinates FMN.

It belongs to the azoreductase type 1 family. Homodimer. Requires FMN as cofactor.

It carries out the reaction 2 a quinone + NADH + H(+) = 2 a 1,4-benzosemiquinone + NAD(+). The catalysed reaction is N,N-dimethyl-1,4-phenylenediamine + anthranilate + 2 NAD(+) = 2-(4-dimethylaminophenyl)diazenylbenzoate + 2 NADH + 2 H(+). In terms of biological role, quinone reductase that provides resistance to thiol-specific stress caused by electrophilic quinones. Its function is as follows. Also exhibits azoreductase activity. Catalyzes the reductive cleavage of the azo bond in aromatic azo compounds to the corresponding amines. This Bacillus cereus (strain ZK / E33L) protein is FMN-dependent NADH:quinone oxidoreductase 1.